A 602-amino-acid chain; its full sequence is Phosphoenolpyruvate carboxykinase [GTP] (602 aa).

Residues Arg89 and Tyr211–Gly213 each bind substrate. Mn(2+)-binding residues include Lys220 and His239. Ser260 contributes to the substrate binding site. Gly261–Ser266 serves as a coordination point for GTP. Residue Ser262 is part of the active site. Asp277 provides a ligand contact to Mn(2+). Asn367–Arg369 is a substrate binding site. Residues Arg369 and Arg400 each coordinate GTP.

This sequence belongs to the phosphoenolpyruvate carboxykinase [GTP] family. Mn(2+) serves as cofactor.

Its subcellular location is the cytoplasm. It carries out the reaction oxaloacetate + GTP = phosphoenolpyruvate + GDP + CO2. The protein operates within carbohydrate biosynthesis; gluconeogenesis. In terms of biological role, catalyzes the conversion of oxaloacetate (OAA) to phosphoenolpyruvate (PEP), the rate-limiting step in the metabolic pathway that produces glucose from lactate and other precursors derived from the citric acid cycle. This Sulfurisphaera tokodaii (strain DSM 16993 / JCM 10545 / NBRC 100140 / 7) (Sulfolobus tokodaii) protein is Phosphoenolpyruvate carboxykinase [GTP].